The following is a 490-amino-acid chain: GTPase Der (490 aa).

EngA-type G domains are found at residues proline 3–leucine 166 and isoleucine 203–threonine 376. Residues glycine 9–serine 16, aspartate 56–isoleucine 60, asparagine 118–aspartate 121, glycine 209–serine 216, aspartate 256–valine 260, and asparagine 321–aspartate 324 each bind GTP. In terms of domain architecture, KH-like spans arginine 377 to glutamate 461.

The protein belongs to the TRAFAC class TrmE-Era-EngA-EngB-Septin-like GTPase superfamily. EngA (Der) GTPase family. Associates with the 50S ribosomal subunit.

Functionally, GTPase that plays an essential role in the late steps of ribosome biogenesis. This chain is GTPase Der, found in Escherichia coli O157:H7.